The following is a 472-amino-acid chain: Endoplasmic reticulum oxidoreductin-2 (472 aa).

The first 37 residues, 1-37, serve as a signal peptide directing secretion; sequence MAETDVGSVKGKEKGSGKRWILLIGAIAAVLLAVVVA. A glycan (N-linked (GlcNAc...) asparagine) is linked at asparagine 44. 6 disulfide bridges follow: cysteine 55/cysteine 74, cysteine 57/cysteine 72, cysteine 111/cysteine 371, cysteine 120/cysteine 125, cysteine 221/cysteine 230, and cysteine 374/cysteine 377. Arginine 200, threonine 202, and tryptophan 213 together coordinate FAD. Residues serine 241 and histidine 244 each coordinate FAD. Asparagine 267 is a glycosylation site (N-linked (GlcNAc...) asparagine). Residues arginine 274 and arginine 281 each contribute to the FAD site. Asparagine 364 carries an N-linked (GlcNAc...) asparagine glycan.

It belongs to the EROs family. May function both as a monomer and a homodimer. FAD serves as cofactor. Post-translationally, N-glycosylated.

Its subcellular location is the endoplasmic reticulum membrane. In terms of biological role, essential oxidoreductase that oxidizes proteins in the endoplasmic reticulum to produce disulfide bonds. Acts by oxidizing directly PDI isomerase through a direct disulfide exchange. Does not act as a direct oxidant of folding substrate, but relies on PDI to transfer oxidizing equivalent. Does not oxidize all PDI related proteins, suggesting that it can discriminate between PDI and related proteins. Its reoxidation probably involves electron transfer to molecular oxygen via FAD. Acts independently of glutathione. May be responsible for a significant proportion of reactive oxygen species (ROS) in the cell, thereby being a source of oxidative stress. In Arabidopsis thaliana (Mouse-ear cress), this protein is Endoplasmic reticulum oxidoreductin-2 (AERO2).